We begin with the raw amino-acid sequence, 106 residues long: Large ribosomal subunit protein P1A (106 aa).

The residue at position 2 (Ser2) is an N-acetylserine. The interval 73–106 (GGVAGGEAGEAEAEKEEEEAKEESDDDMGFGLFD) is disordered. Positions 81 to 100 (GEAEAEKEEEEAKEESDDDM) are enriched in acidic residues. Position 96 is a phosphoserine (Ser96).

Belongs to the eukaryotic ribosomal protein P1/P2 family. As to quaternary structure, component of the large ribosomal subunit (LSU). Mature yeast ribosomes consist of a small (40S) and a large (60S) subunit. The 40S small subunit contains 1 molecule of ribosomal RNA (18S rRNA) and 33 different proteins (encoded by 57 genes). The large 60S subunit contains 3 rRNA molecules (25S, 5.8S and 5S rRNA) and 46 different proteins (encoded by 81 genes). The 5 acidic ribosomal P-proteins form the stalk structure of the 60S subunit. They are organized as a pentameric complex in which uL10/P0 interacts with 2 heterodimers, P1A-P2B and P1B-P2A. Post-translationally, N-terminally acetylated by acetyltransferase NatA.

It localises to the cytoplasm. Functionally, component of the ribosome, a large ribonucleoprotein complex responsible for the synthesis of proteins in the cell. The small ribosomal subunit (SSU) binds messenger RNAs (mRNAs) and translates the encoded message by selecting cognate aminoacyl-transfer RNA (tRNA) molecules. The large subunit (LSU) contains the ribosomal catalytic site termed the peptidyl transferase center (PTC), which catalyzes the formation of peptide bonds, thereby polymerizing the amino acids delivered by tRNAs into a polypeptide chain. The nascent polypeptides leave the ribosome through a tunnel in the LSU and interact with protein factors that function in enzymatic processing, targeting, and the membrane insertion of nascent chains at the exit of the ribosomal tunnel. The chain is Large ribosomal subunit protein P1A from Saccharomyces cerevisiae (strain ATCC 204508 / S288c) (Baker's yeast).